We begin with the raw amino-acid sequence, 188 residues long: Gamma-glutamylcyclotransferase (188 aa).

Position 19-22 (19-22 (YFAY)) interacts with substrate. The active-site Proton acceptor is E98. S173 bears the Phosphoserine mark.

This sequence belongs to the gamma-glutamylcyclotransferase family. In terms of assembly, homodimer.

It carries out the reaction an alpha-(gamma-L-glutamyl)-L-amino acid = 5-oxo-L-proline + an L-alpha-amino acid. Functionally, catalyzes the formation of 5-oxoproline from gamma-glutamyl dipeptides and may play a significant role in glutathione homeostasis. Induces release of cytochrome c from mitochondria with resultant induction of apoptosis. This chain is Gamma-glutamylcyclotransferase (GGCT), found in Bos taurus (Bovine).